Here is a 405-residue protein sequence, read N- to C-terminus: Acetylornithine aminotransferase 1 (405 aa).

Pyridoxal 5'-phosphate is bound by residues 108–109 (GA) and Phe141. N(2)-acetyl-L-ornithine is bound at residue Arg144. Residue 226–229 (DEVQ) coordinates pyridoxal 5'-phosphate. The residue at position 255 (Lys255) is an N6-(pyridoxal phosphate)lysine. Position 283 (Thr283) interacts with N(2)-acetyl-L-ornithine. Pyridoxal 5'-phosphate is bound at residue Thr284.

Belongs to the class-III pyridoxal-phosphate-dependent aminotransferase family. ArgD subfamily. Homodimer. The cofactor is pyridoxal 5'-phosphate.

The protein localises to the cytoplasm. It catalyses the reaction N(2)-acetyl-L-ornithine + 2-oxoglutarate = N-acetyl-L-glutamate 5-semialdehyde + L-glutamate. The protein operates within amino-acid biosynthesis; L-arginine biosynthesis; N(2)-acetyl-L-ornithine from L-glutamate: step 4/4. This chain is Acetylornithine aminotransferase 1, found in Pseudomonas syringae pv. tomato (strain ATCC BAA-871 / DC3000).